We begin with the raw amino-acid sequence, 362 residues long: UDP-3-O-acylglucosamine N-acyltransferase (362 aa).

The Proton acceptor role is filled by His251.

Belongs to the transferase hexapeptide repeat family. LpxD subfamily. In terms of assembly, homotrimer.

The catalysed reaction is a UDP-3-O-[(3R)-3-hydroxyacyl]-alpha-D-glucosamine + a (3R)-hydroxyacyl-[ACP] = a UDP-2-N,3-O-bis[(3R)-3-hydroxyacyl]-alpha-D-glucosamine + holo-[ACP] + H(+). It functions in the pathway bacterial outer membrane biogenesis; LPS lipid A biosynthesis. In terms of biological role, catalyzes the N-acylation of UDP-3-O-acylglucosamine using 3-hydroxyacyl-ACP as the acyl donor. Is involved in the biosynthesis of lipid A, a phosphorylated glycolipid that anchors the lipopolysaccharide to the outer membrane of the cell. This Cupriavidus pinatubonensis (strain JMP 134 / LMG 1197) (Cupriavidus necator (strain JMP 134)) protein is UDP-3-O-acylglucosamine N-acyltransferase.